Reading from the N-terminus, the 355-residue chain is Tabersonine 16-O-methyltransferase (355 aa).

S-adenosyl-L-methionine is bound by residues 198-201 (IGGG), Asp-222, 222-223 (DL), 242-243 (DM), and Lys-256. His-260 (proton acceptor) is an active-site residue.

This sequence belongs to the class I-like SAM-binding methyltransferase superfamily. Cation-independent O-methyltransferase family. COMT subfamily. In terms of assembly, homodimer. As to expression, expressed in leaves and flowers. Detected in stems and roots. In leaves, expressed in epidermal cells.

Its subcellular location is the cytoplasm. The enzyme catalyses 16-hydroxytabersonine + S-adenosyl-L-methionine = 16-methoxytabersonine + S-adenosyl-L-homocysteine + H(+). Its pathway is alkaloid biosynthesis; vindoline biosynthesis. In terms of biological role, 16-O-methyltransferase involved in the biosynthesis of vindoline. Highly specific for 16-hydroxytabersonine. No activity with tabersonine, 3-hydroxytyramine, 4-hydroxytyramine, 5-hydroxytryptamine (5HT), 2,3-dihydro-3-hydroxytabersonine, lochnericine, hoerhammericine, 16-hydroxy-2,3-dihydro-3-hydroxytabersonine, 16-hydroxylochnericine, 16-hydroxyhoerhammericine, quercetin, kaempferol and caffeic acid as substrates. The sequence is that of Tabersonine 16-O-methyltransferase from Catharanthus roseus (Madagascar periwinkle).